A 689-amino-acid chain; its full sequence is Protein-glutamine gamma-glutamyltransferase 2 (689 aa).

Residues cysteine 278, histidine 336, and aspartate 359 contribute to the active site. The Ca(2+) site is built by asparagine 399, aspartate 401, glutamate 437, glutamate 447, and glutamate 452. The segment at serine 427 to arginine 453 is disordered. Residues valine 431–histidine 441 are compositionally biased toward basic and acidic residues. Arginine 476–alanine 483 provides a ligand contact to GTP. Glutamate 539 contacts Ca(2+). Arginine 580–tyrosine 583 serves as a coordination point for GTP.

Belongs to the transglutaminase superfamily. Transglutaminase family. In terms of assembly, monomer. It depends on Ca(2+) as a cofactor. In terms of tissue distribution, predominates in mature erythrocytes. Also found in kidney and cardiac muscle.

It is found in the cytoplasm. Its subcellular location is the cytosol. It localises to the nucleus. The protein localises to the chromosome. The protein resides in the secreted. It is found in the extracellular space. Its subcellular location is the extracellular matrix. It localises to the cell membrane. The protein localises to the mitochondrion. The catalysed reaction is L-glutaminyl-[protein] + L-lysyl-[protein] = [protein]-L-lysyl-N(6)-5-L-glutamyl-[protein] + NH4(+). It carries out the reaction L-glutaminyl-[protein] + serotonin = 5-serotonyl-L-glutamyl-[protein] + NH4(+). The enzyme catalyses L-glutaminyl-[protein] + dopamine = 5-dopaminyl-L-glutamyl-[protein] + NH4(+). It catalyses the reaction L-glutaminyl-[protein] + histamine = 5-histaminyl-L-glutamyl-[protein] + NH4(+). The catalysed reaction is L-glutaminyl-[protein] + (R)-noradrenaline = 5-(R)-noradrenalinyl-L-glutamyl-[protein] + NH4(+). It carries out the reaction L-glutaminyl-[protein] + H2O = L-glutamyl-[protein] + NH4(+). With respect to regulation, acyltransferase activity is regulated by the binding of GTP and Ca(2+): inactivated by GTP, which stabilizes its closed structure, thereby obstructing the accessibility of substrates to the active sites. In contrast, Ca(2+) acts as a cofactor by inducing conformational change to the active open form. In absence of Ca(2+), Mg(2+) may bind Ca(2+)-binding sites, promoting GTP-binding and subsequent inhibition of the acyltransferase activity. Functionally, calcium-dependent acyltransferase that catalyzes the formation of covalent bonds between peptide-bound glutamine and various primary amines, such as gamma-amino group of peptide-bound lysine, or mono- and polyamines, thereby producing cross-linked or aminated proteins, respectively. Involved in many biological processes, such as bone development, angiogenesis, wound healing, cellular differentiation, chromatin modification and apoptosis. Acts as a protein-glutamine gamma-glutamyltransferase by mediating the cross-linking of proteins: under physiological conditions, the protein cross-linking activity is inhibited by GTP; inhibition is relieved by Ca(2+) in response to various stresses. When secreted, catalyzes cross-linking of proteins of the extracellular matrix, resulting in the formation of scaffolds. Plays a key role during apoptosis, both by (1) promoting the cross-linking of cytoskeletal proteins resulting in condensation of the cytoplasm, and by (2) mediating cross-linking proteins of the extracellular matrix, resulting in the irreversible formation of scaffolds that stabilize the integrity of the dying cells before their clearance by phagocytosis, thereby preventing the leakage of harmful intracellular components. In addition to protein cross-linking, can use different monoamine substrates to catalyze a vast array of protein post-translational modifications: mediates aminylation of serotonin, dopamine, noradrenaline or histamine into glutamine residues of target proteins to generate protein serotonylation, dopaminylation, noradrenalinylation or histaminylation, respectively. Mediates protein serotonylation of small GTPases during activation and aggregation of platelets, leading to constitutive activation of these GTPases. Plays a key role in chromatin organization by mediating serotonylation and dopaminylation of histone H3. Catalyzes serotonylation of 'Gln-5' of histone H3 (H3Q5ser) during serotonergic neuron differentiation, thereby facilitating transcription. Acts as a mediator of neurotransmission-independent role of nuclear dopamine in ventral tegmental area (VTA) neurons: catalyzes dopaminylation of 'Gln-5' of histone H3 (H3Q5dop), thereby regulating relapse-related transcriptional plasticity in the reward system. Also acts as a protein deamidase by mediating the side chain deamidation of specific glutamine residues of proteins to glutamate. May also act as an isopeptidase cleaving the previously formed cross-links. Also able to participate in signaling pathways independently of its acyltransferase activity: acts as a signal transducer in alpha-1 adrenergic receptor-mediated stimulation of phospholipase C-delta (PLCD) activity and is required for coupling alpha-1 adrenergic agonists to the stimulation of phosphoinositide lipid metabolism. The polypeptide is Protein-glutamine gamma-glutamyltransferase 2 (Gallus gallus (Chicken)).